The chain runs to 370 residues: Thiamine-repressible mitochondrial transport protein THI74 (370 aa).

Over 1-10 (MNRVGIDVDH) the chain is Cytoplasmic. A helical transmembrane segment spans residues 11-31 (MIGVLLLAVVVVFWVGASCLT). At 32 to 42 (NELLETNAYNK) the chain is on the mitochondrial intermembrane side. The helical transmembrane segment at 43–63 (PFFLTYLNISSFALYLTPDLW) threads the bilayer. Residues 64–119 (RIIQSRRKSLQERTERTLPIHTQESFSEFLPLLSSTPSTSSNLSSIADTKVKDTMR) are Cytoplasmic-facing. Residues 120–140 (LSLLFCVLWFVANLAANAALS) traverse the membrane as a helical segment. The EamA domain maps to 129–190 (FVANLAANAA…SLFGIILIVM (62 aa)). Residues 141-146 (YTTVAS) lie on the Mitochondrial intermembrane side of the membrane. A helical membrane pass occupies residues 147–167 (STILSSTSSFFTLFLATSLGI). Over 168–169 (ET) the chain is Cytoplasmic. The chain crosses the membrane as a helical span at residues 170 to 190 (FSTKKLLGLFVSLFGIILIVM). At 191-203 (QSSKQQDSVSASS) the chain is on the mitochondrial intermembrane side. Residues 204 to 224 (FLVGNTLALLGSLGYSVYTTL) traverse the membrane as a helical segment. Topologically, residues 225–239 (LKYEISSKGLRLDIQ) are cytoplasmic. Residues 240-260 (MFLGYVGIFTFLLFWPILIIL) traverse the membrane as a helical segment. Over 261-273 (DITHMETFELPSN) the chain is Mitochondrial intermembrane. The helical transmembrane segment at 274 to 294 (FHISFLVMLNCIIIFVSDYFW) threads the bilayer. Residues 295-303 (CKALILTSP) lie on the Cytoplasmic side of the membrane. A helical membrane pass occupies residues 304 to 324 (LVVTVALTFTIPLAMFADFVW). Residues 325–326 (RE) are Mitochondrial intermembrane-facing. Residues 327-347 (AFFTPWYIIGVIFIFVSFFLV) form a helical membrane-spanning segment. The Cytoplasmic portion of the chain corresponds to 348-370 (NHRGESAVEKDCAAVEKGPILDA).

The protein localises to the mitochondrion membrane. Its function is as follows. May be involved in thiaminediphosphate transport across the mitochondrial membrane. The polypeptide is Thiamine-repressible mitochondrial transport protein THI74 (THI74) (Saccharomyces cerevisiae (strain ATCC 204508 / S288c) (Baker's yeast)).